A 264-amino-acid polypeptide reads, in one-letter code: Small ribosomal subunit protein uS2 (264 aa).

It belongs to the universal ribosomal protein uS2 family.

The chain is Small ribosomal subunit protein uS2 from Synechococcus sp. (strain JA-2-3B'a(2-13)) (Cyanobacteria bacterium Yellowstone B-Prime).